The following is a 295-amino-acid chain: Acetylglutamate kinase (295 aa).

Substrate contacts are provided by residues 66 to 67 (GG), arginine 88, and asparagine 193.

This sequence belongs to the acetylglutamate kinase family. ArgB subfamily.

Its subcellular location is the cytoplasm. It catalyses the reaction N-acetyl-L-glutamate + ATP = N-acetyl-L-glutamyl 5-phosphate + ADP. The protein operates within amino-acid biosynthesis; L-arginine biosynthesis; N(2)-acetyl-L-ornithine from L-glutamate: step 2/4. Catalyzes the ATP-dependent phosphorylation of N-acetyl-L-glutamate. This Rhizobium etli (strain ATCC 51251 / DSM 11541 / JCM 21823 / NBRC 15573 / CFN 42) protein is Acetylglutamate kinase.